The primary structure comprises 202 residues: MSVVDLSLWEPKTALGRMVKEGKIRTIDEIFANNLLIKEPEIVDILLPGLKQELLNLNLVQRQTHAGERNQFQAVVAVGNEDGYVGVGIGKSRQVRQAIEKATREAKLNITPVRRGCGSWKCSCDEPHSVPFVVSGKSGSVEVTLIPAPKGVGLVAGDVAKVVLRLAGIKDVWTKTRGDTRTTLNFALAVFNALRNTYYFKL.

Residues 50-113 (LKQELLNLNL…REAKLNITPV (64 aa)) form the S5 DRBM domain.

The protein belongs to the universal ribosomal protein uS5 family. In terms of assembly, part of the 30S ribosomal subunit. Contacts protein S4.

Its function is as follows. With S4 and S12 plays an important role in translational accuracy. This chain is Small ribosomal subunit protein uS5, found in Pyrobaculum calidifontis (strain DSM 21063 / JCM 11548 / VA1).